A 115-amino-acid polypeptide reads, in one-letter code: uncharacterized protein (115 aa).

Residues 36–56 (SFFSLGLIACFCIFLIIVLSE) form a helical membrane-spanning segment.

It localises to the membrane. This is an uncharacterized protein from Saccharomyces cerevisiae (strain ATCC 204508 / S288c) (Baker's yeast).